Reading from the N-terminus, the 92-residue chain is Phosphoribosyl-ATP pyrophosphatase (92 aa).

This sequence belongs to the PRA-PH family.

Its subcellular location is the cytoplasm. The enzyme catalyses 1-(5-phospho-beta-D-ribosyl)-ATP + H2O = 1-(5-phospho-beta-D-ribosyl)-5'-AMP + diphosphate + H(+). Its pathway is amino-acid biosynthesis; L-histidine biosynthesis; L-histidine from 5-phospho-alpha-D-ribose 1-diphosphate: step 2/9. This Leptospira biflexa serovar Patoc (strain Patoc 1 / ATCC 23582 / Paris) protein is Phosphoribosyl-ATP pyrophosphatase.